The following is a 380-amino-acid chain: MASLRKSHPLLKIANDALVDLPAPSNISVWWNFGSLLGLCLITQILTGLFLAMHYTSDIATAFTSVAHICRDVNYGWLIRNIHANGASFFFICIYLHIGRGLYYGSFLYKETWNVGVILLLLVMMTAFVGYVLPWGQMSFWGATVITNLLSAVPYVGNTLVQWIWGGFSVDNATLTRFFAFHFLFPFVIAAATVIHLIFLHETGSNNPTGLNSDSDKVPFHPYFSYKDLLGFAALLIALAALALFSPNLLGDPDNFTPANPLVTPPHIKPEWYFLFAYAILRSIPNKLGGVLALLFSILILMLVPILHTSKQRSLMFRPFSQFLFWSLVADVMILTWIGGMPVEHPFVIIGQVASFLYFFLFLVMIPVTGWLENKILGWQ.

4 helical membrane-spanning segments follow: residues 33 to 53 (FGSLLGLCLITQILTGLFLAM), 77 to 98 (WLIRNIHANGASFFFICIYLHI), 113 to 133 (WNVGVILLLLVMMTAFVGYVL), and 178 to 198 (FFAFHFLFPFVIAAATVIHLI). His-83 and His-97 together coordinate heme b. Residues His-182 and His-196 each contribute to the heme b site. Residue His-201 participates in a ubiquinone binding. 4 helical membrane-spanning segments follow: residues 226 to 246 (YKDLLGFAALLIALAALALFS), 288 to 308 (LGGVLALLFSILILMLVPILH), 320 to 340 (FSQFLFWSLVADVMILTWIGG), and 347 to 367 (FVIIGQVASFLYFFLFLVMIP).

The protein belongs to the cytochrome b family. The cytochrome bc1 complex contains 3 respiratory subunits (MT-CYB, CYC1 and UQCRFS1), 2 core proteins (UQCRC1 and UQCRC2) and probably 6 low-molecular weight proteins. Requires heme b as cofactor.

The protein resides in the mitochondrion inner membrane. Component of the ubiquinol-cytochrome c reductase complex (complex III or cytochrome b-c1 complex) that is part of the mitochondrial respiratory chain. The b-c1 complex mediates electron transfer from ubiquinol to cytochrome c. Contributes to the generation of a proton gradient across the mitochondrial membrane that is then used for ATP synthesis. This is Cytochrome b (mt-cyb) from Paralichthys olivaceus (Bastard halibut).